The sequence spans 279 residues: MRRLFLFSLLFLFFYSSSSSRSSSESHIFIYGGCSPEKYTPNTPFESNRDTFLSSVVTSSSDASFNSFAVGNDSSSSSSSSAVFGLYQCRDDLRSSDCSKCIQTSVDQITLICPYSYGASLQLEGCFLRYETNDFLGKPDTSLRYKKCSSKSVENDYDFFKRRDDVLSDLESTQLGYKVSRSGLVEGYAQCVGDLSPSDCTACLAESVGKLKNLCGSAVAAEVYLAQCYARYWGSGYYDFSSDPTNGDHVGKSIAIIVGVIAGFAILVVLLSLCRNSMH.

The signal sequence occupies residues 1 to 20; sequence MRRLFLFSLLFLFFYSSSSS. The Extracellular segment spans residues 21–253; it reads RSSSESHIFI…PTNGDHVGKS (233 aa). 2 Gnk2-homologous domains span residues 27–135 and 137–237; these read HIFI…TNDF and GKPD…GSGY. Disulfide bonds link Cys-34/Cys-113, Cys-89/Cys-98, Cys-101/Cys-126, Cys-148/Cys-215, Cys-191/Cys-200, and Cys-203/Cys-228. Residues 254–274 form a helical membrane-spanning segment; sequence IAIIVGVIAGFAILVVLLSLC. Residues 254–274 are necessary and sufficient for plasmodesmal targeting; it reads IAIIVGVIAGFAILVVLLSLC. The Cytoplasmic portion of the chain corresponds to 275–279; that stretch reads RNSMH.

It belongs to the cysteine-rich repeat secretory protein family. Plasmodesmata-located proteins (PDLD) subfamily. As to quaternary structure, interacts with ACBP6; interaction occurs at the plasma membrane. (Microbial infection) Interacts with Grapevine fanleaf virus (GFLV) 2B-MP. As to expression, highly expressed in pollen, lateral root and elongation zone. Higher expression in the reproductive tissues (flowers and buds) than in vegetative organs (leaves and stems). High expression in shoot and root phloem companion cells (at protein level).

It localises to the cell membrane. Its subcellular location is the cell junction. The protein localises to the plasmodesma. Modulates cell-to-cell trafficking. In Arabidopsis thaliana (Mouse-ear cress), this protein is Plasmodesmata-located protein 8.